Here is a 361-residue protein sequence, read N- to C-terminus: 3-isopropylmalate dehydrogenase (361 aa).

78 to 91 (GTQWDSLPRHLRPE) is an NAD(+) binding site. The substrate site is built by Arg98, Arg108, Arg136, and Asp226. Mg(2+)-binding residues include Asp226, Asp250, and Asp254. 284–296 (GSAPDIAGQDKAN) lines the NAD(+) pocket.

It belongs to the isocitrate and isopropylmalate dehydrogenases family. LeuB type 1 subfamily. Homodimer. Mg(2+) is required as a cofactor. It depends on Mn(2+) as a cofactor.

The protein resides in the cytoplasm. The enzyme catalyses (2R,3S)-3-isopropylmalate + NAD(+) = 4-methyl-2-oxopentanoate + CO2 + NADH. It functions in the pathway amino-acid biosynthesis; L-leucine biosynthesis; L-leucine from 3-methyl-2-oxobutanoate: step 3/4. In terms of biological role, catalyzes the oxidation of 3-carboxy-2-hydroxy-4-methylpentanoate (3-isopropylmalate) to 3-carboxy-4-methyl-2-oxopentanoate. The product decarboxylates to 4-methyl-2 oxopentanoate. In Thermosynechococcus vestitus (strain NIES-2133 / IAM M-273 / BP-1), this protein is 3-isopropylmalate dehydrogenase.